The sequence spans 893 residues: Phosphatidate phosphatase LPIN2 (893 aa).

The segment at M1–I108 is N-LIP. Position 106 is a phosphoserine (S106). The segment at L122 to H216 is disordered. Positions V123 to S151 are enriched in polar residues. Residues V152–C162 show a composition bias toward basic residues. Positions K153 to R158 match the Nuclear localization signal motif. A phosphoserine mark is found at S174, S186, and S187. Residues L204–S213 show a composition bias toward basic and acidic residues. S243 and S303 each carry phosphoserine. Disordered regions lie at residues L357–I400 and F417–L456. The span at A360 to P371 shows a compositional bias: low complexity. A compositionally biased stretch (basic residues) spans K384 to Q393. Residues D423 to G445 are compositionally biased toward polar residues. The residue at position 563 (S563) is a Phosphoserine. Positions L568–E611 are disordered. Residues T601–E611 are compositionally biased toward acidic residues. Residues Y632 to E834 form a C-LIP region. The DXDXT motif signature appears at D686 to T690. Residues L697 to L701 carry the LXXIL motif motif.

It belongs to the lipin family. It depends on Mg(2+) as a cofactor. As to expression, expressed at high level in liver and to some extend in lung, kidney, placenta, spleen, thymus, lymph node, prostate, testes, small intestine, and colon. Expressed also in circulating red blood cells and site of lymphopoiesis.

It is found in the nucleus. The protein resides in the cytoplasm. Its subcellular location is the cytosol. It localises to the endoplasmic reticulum membrane. It carries out the reaction a 1,2-diacyl-sn-glycero-3-phosphate + H2O = a 1,2-diacyl-sn-glycerol + phosphate. Inhibited by N-ethylmaleimide. Its function is as follows. Acts as a magnesium-dependent phosphatidate phosphatase enzyme which catalyzes the conversion of phosphatidic acid to diacylglycerol during triglyceride, phosphatidylcholine and phosphatidylethanolamine biosynthesis in the endoplasmic reticulum membrane. Plays important roles in controlling the metabolism of fatty acids at different levels. Also acts as a nuclear transcriptional coactivator for PPARGC1A to modulate lipid metabolism. This is Phosphatidate phosphatase LPIN2 from Mus musculus (Mouse).